The sequence spans 196 residues: NADH-quinone oxidoreductase subunit I (196 aa).

4Fe-4S ferredoxin-type domains follow at residues 54–84 (LNRWPDGLEKCVGCELCAWACPADAIYVEGA) and 104–133 (RVYQINYLRCILCGLCIEACPTRALTMTNE). [4Fe-4S] cluster-binding residues include Cys64, Cys67, Cys70, Cys74, Cys113, Cys116, Cys119, and Cys123.

Belongs to the complex I 23 kDa subunit family. NDH-1 is composed of 14 different subunits. Subunits NuoA, H, J, K, L, M, N constitute the membrane sector of the complex. It depends on [4Fe-4S] cluster as a cofactor.

It localises to the cell membrane. The catalysed reaction is a quinone + NADH + 5 H(+)(in) = a quinol + NAD(+) + 4 H(+)(out). Its function is as follows. NDH-1 shuttles electrons from NADH, via FMN and iron-sulfur (Fe-S) centers, to quinones in the respiratory chain. The immediate electron acceptor for the enzyme in this species is believed to be ubiquinone. Couples the redox reaction to proton translocation (for every two electrons transferred, four hydrogen ions are translocated across the cytoplasmic membrane), and thus conserves the redox energy in a proton gradient. The sequence is that of NADH-quinone oxidoreductase subunit I from Nocardioides sp. (strain ATCC BAA-499 / JS614).